The primary structure comprises 73 residues: uncharacterized protein (73 aa).

It belongs to the asfivirus DP63R family.

This is an uncharacterized protein from Ornithodoros (relapsing fever ticks).